Consider the following 212-residue polypeptide: Uridine kinase (212 aa).

13-20 (GASASGKS) contributes to the ATP binding site.

This sequence belongs to the uridine kinase family.

The protein localises to the cytoplasm. The catalysed reaction is uridine + ATP = UMP + ADP + H(+). It carries out the reaction cytidine + ATP = CMP + ADP + H(+). It participates in pyrimidine metabolism; CTP biosynthesis via salvage pathway; CTP from cytidine: step 1/3. It functions in the pathway pyrimidine metabolism; UMP biosynthesis via salvage pathway; UMP from uridine: step 1/1. This Shewanella baltica (strain OS223) protein is Uridine kinase.